The sequence spans 118 residues: uncharacterized protein (118 aa).

This is an uncharacterized protein from Bacillus subtilis (strain 168).